Reading from the N-terminus, the 248-residue chain is UPF0246 protein RF_0769 (248 aa).

This sequence belongs to the UPF0246 family.

This is UPF0246 protein RF_0769 from Rickettsia felis (strain ATCC VR-1525 / URRWXCal2) (Rickettsia azadi).